The primary structure comprises 481 residues: F-box protein At1g49360 (481 aa).

Positions 105 to 156 constitute an F-box domain; that stretch reads LKEDLFLPSDLVRLILSRLSFKDNIRSSTVCKAWGDIAASVRVKSRRCWLLY.

The polypeptide is F-box protein At1g49360 (Arabidopsis thaliana (Mouse-ear cress)).